Here is a 318-residue protein sequence, read N- to C-terminus: Electron transfer flavoprotein subunit alpha (318 aa).

Residue 257 to 285 (LYIALGISGAIQHRAGMQTSKTIVAVNKD) participates in FAD binding.

This sequence belongs to the ETF alpha-subunit/FixB family. In terms of assembly, heterodimer of an alpha and a beta subunit. Requires FAD as cofactor.

The electron transfer flavoprotein serves as a specific electron acceptor for other dehydrogenases. It transfers the electrons to the main respiratory chain via ETF-ubiquinone oxidoreductase (ETF dehydrogenase). This is Electron transfer flavoprotein subunit alpha (etfA) from Mycobacterium leprae (strain TN).